The chain runs to 52 residues: Dibenzothiophene metabolism operon protein NahQ/DoxH (52 aa).

It participates in aromatic compound metabolism; naphthalene degradation. May be involved in the conversion of 2-hydroxy-4-(2'-oxo-3,5-cyclohexadienyl)-buta-2,4-dienoate to cis-O-hydroxybenzylidenepyruvate. DoxH and DoxJ encode different enzymes that may have interchangeable functions. The polypeptide is Dibenzothiophene metabolism operon protein NahQ/DoxH (nahQ) (Pseudomonas putida (Arthrobacter siderocapsulatus)).